The chain runs to 291 residues: Shikimate dehydrogenase (NADP(+)) (291 aa).

Residues 22 to 24 and threonine 69 contribute to the shikimate site; that span reads SLS. Lysine 73 (proton acceptor) is an active-site residue. Shikimate is bound by residues asparagine 94 and aspartate 110. NADP(+) contacts are provided by residues 131-135 and leucine 226; that span reads GSGGA. Residue tyrosine 228 coordinates shikimate. Position 249 (glycine 249) interacts with NADP(+).

It belongs to the shikimate dehydrogenase family. In terms of assembly, homodimer.

It catalyses the reaction shikimate + NADP(+) = 3-dehydroshikimate + NADPH + H(+). The protein operates within metabolic intermediate biosynthesis; chorismate biosynthesis; chorismate from D-erythrose 4-phosphate and phosphoenolpyruvate: step 4/7. Involved in the biosynthesis of the chorismate, which leads to the biosynthesis of aromatic amino acids. Catalyzes the reversible NADPH linked reduction of 3-dehydroshikimate (DHSA) to yield shikimate (SA). The sequence is that of Shikimate dehydrogenase (NADP(+)) from Synechococcus sp. (strain JA-3-3Ab) (Cyanobacteria bacterium Yellowstone A-Prime).